An 84-amino-acid chain; its full sequence is MAELSLAELREIMRQSLGEDEVPDLADADTVTFEDLGLDSLAVLETVNHIERTYGVKLPEEELAEIRTPHSMLIFVNERLRAAV.

Residues 3–80 (ELSLAELREI…SMLIFVNERL (78 aa)) form the Carrier domain. Ser-40 is modified (O-(pantetheine 4'-phosphoryl)serine).

It participates in antibiotic biosynthesis; daunorubicin biosynthesis. Its pathway is antibiotic biosynthesis; carminomycin biosynthesis. It functions in the pathway antibiotic biosynthesis; rhodomycin biosynthesis. The protein operates within antibiotic biosynthesis; aclacinomycin biosynthesis. Involved in the biosynthesis of aklanonate which is an important precursor common to the formation of the clinically significant anthracyclines such as carminomycin, daunorubicin (daunomycin), rhodomycin, aclacinomycin T (aklavin) and aclacinomycin A (aclarubicin). These compounds are aromatic polyketide antibiotics that exhibit high cytotoxicity and are widely applied in the chemotherapy of a variety of cancers. The protein is Anthracycline acyl carrier protein DauA (dauA) of Streptomyces sp. (strain C5).